Reading from the N-terminus, the 186-residue chain is Ribosome maturation factor RimM (186 aa).

The PRC barrel domain occupies 93–166 (PDEYYDHQLM…RAVIDPPPGL (74 aa)). A disordered region spans residues 160-186 (IDPPPGLIDDRAEVDSSDTEAATEADA). Positions 174–186 (DSSDTEAATEADA) are enriched in acidic residues.

The protein belongs to the RimM family. Binds ribosomal protein uS19.

Its subcellular location is the cytoplasm. In terms of biological role, an accessory protein needed during the final step in the assembly of 30S ribosomal subunit, possibly for assembly of the head region. Essential for efficient processing of 16S rRNA. May be needed both before and after RbfA during the maturation of 16S rRNA. It has affinity for free ribosomal 30S subunits but not for 70S ribosomes. This Streptomyces avermitilis (strain ATCC 31267 / DSM 46492 / JCM 5070 / NBRC 14893 / NCIMB 12804 / NRRL 8165 / MA-4680) protein is Ribosome maturation factor RimM.